Consider the following 438-residue polypeptide: UPF0597 protein YE0448 (438 aa).

The protein belongs to the UPF0597 family.

In Yersinia enterocolitica serotype O:8 / biotype 1B (strain NCTC 13174 / 8081), this protein is UPF0597 protein YE0448.